The chain runs to 237 residues: Ribose-5-phosphate isomerase A (237 aa).

Residues 30–33 (SGST), 87–90 (DGAD), and 100–103 (KGGG) contribute to the substrate site. The active-site Proton acceptor is Glu109. Lys127 serves as a coordination point for substrate.

It belongs to the ribose 5-phosphate isomerase family. Homodimer.

It carries out the reaction aldehydo-D-ribose 5-phosphate = D-ribulose 5-phosphate. It participates in carbohydrate degradation; pentose phosphate pathway; D-ribose 5-phosphate from D-ribulose 5-phosphate (non-oxidative stage): step 1/1. Catalyzes the reversible conversion of ribose-5-phosphate to ribulose 5-phosphate. In Prochlorococcus marinus (strain SARG / CCMP1375 / SS120), this protein is Ribose-5-phosphate isomerase A.